The sequence spans 205 residues: Small ribosomal subunit protein uS4 (205 aa).

Positions 20–44 (WGRPKSPVNRREYGPGQHGQRRKGK) are disordered. An S4 RNA-binding domain is found at 94-154 (SRLDAIVYRS…ERSKQLLLVL (61 aa)).

This sequence belongs to the universal ribosomal protein uS4 family. In terms of assembly, part of the 30S ribosomal subunit. Contacts protein S5. The interaction surface between S4 and S5 is involved in control of translational fidelity.

In terms of biological role, one of the primary rRNA binding proteins, it binds directly to 16S rRNA where it nucleates assembly of the body of the 30S subunit. Functionally, with S5 and S12 plays an important role in translational accuracy. This is Small ribosomal subunit protein uS4 from Bartonella bacilliformis (strain ATCC 35685 / KC583 / Herrer 020/F12,63).